The sequence spans 89 residues: UPF0367 protein MAE_19160 (89 aa).

It belongs to the UPF0367 family.

In Microcystis aeruginosa (strain NIES-843 / IAM M-2473), this protein is UPF0367 protein MAE_19160.